A 211-amino-acid chain; its full sequence is tRNA (guanine-N(7)-)-methyltransferase (211 aa).

Glu-43, Glu-68, Asp-95, and Asp-117 together coordinate S-adenosyl-L-methionine. The active site involves Asp-117. Substrate contacts are provided by residues Lys-121, Asp-153, and 190–193 (TEYE).

The protein belongs to the class I-like SAM-binding methyltransferase superfamily. TrmB family.

The catalysed reaction is guanosine(46) in tRNA + S-adenosyl-L-methionine = N(7)-methylguanosine(46) in tRNA + S-adenosyl-L-homocysteine. It participates in tRNA modification; N(7)-methylguanine-tRNA biosynthesis. Catalyzes the formation of N(7)-methylguanine at position 46 (m7G46) in tRNA. This Staphylococcus carnosus (strain TM300) protein is tRNA (guanine-N(7)-)-methyltransferase.